Consider the following 283-residue polypeptide: Mitochondrial outer membrane protein porin (283 aa).

Belongs to the eukaryotic mitochondrial porin family.

Its subcellular location is the mitochondrion outer membrane. In terms of biological role, forms a channel through the cell membrane that allows diffusion of small hydrophilic molecules. The channel adopts an open conformation at low or zero membrane potential and a closed conformation at potentials above 30-40 mV. The open state has a weak anion selectivity whereas the closed state is cation-selective. The sequence is that of Mitochondrial outer membrane protein porin from Neurospora crassa (strain ATCC 24698 / 74-OR23-1A / CBS 708.71 / DSM 1257 / FGSC 987).